The sequence spans 529 residues: Laccase-1 (529 aa).

Residues 1–23 form the signal peptide; the sequence is MFPGARILATLTLALHLLHGTHA. 3 Plastocyanin-like domains span residues 25–159, 170–312, and 380–499; these read IGPT…FIVY, DVDN…ILRY, and TAPV…FAED. The N-linked (GlcNAc...) asparagine glycan is linked to Asn57. Cu cation-binding residues include His96, His98, His141, and His143. Cystine bridges form between Cys117/Cys514 and Cys149/Cys236. N-linked (GlcNAc...) asparagine glycosylation is found at Asn239 and Asn282. Residues His425, His428, His430, His481, Cys482, His483, and His487 each contribute to the Cu cation site.

It belongs to the multicopper oxidase family. The cofactor is Cu cation.

It localises to the secreted. The enzyme catalyses 4 hydroquinone + O2 = 4 benzosemiquinone + 2 H2O. Functionally, lignin degradation and detoxification of lignin-derived products. This Pleurotus ostreatus (Oyster mushroom) protein is Laccase-1 (POX1).